Here is a 403-residue protein sequence, read N- to C-terminus: Tyrosine--tRNA ligase (403 aa).

Positions 46–55 (PTAPDLHLGH) match the 'HIGH' region motif. A 'KMSKS' region motif is present at residues 230–234 (KMSKS). Residue K233 coordinates ATP. Residues 342–402 (LFITQILNQA…GKKAYAKVTV (61 aa)) enclose the S4 RNA-binding domain.

Belongs to the class-I aminoacyl-tRNA synthetase family. TyrS type 2 subfamily. As to quaternary structure, homodimer.

It localises to the cytoplasm. The catalysed reaction is tRNA(Tyr) + L-tyrosine + ATP = L-tyrosyl-tRNA(Tyr) + AMP + diphosphate + H(+). Catalyzes the attachment of tyrosine to tRNA(Tyr) in a two-step reaction: tyrosine is first activated by ATP to form Tyr-AMP and then transferred to the acceptor end of tRNA(Tyr). This is Tyrosine--tRNA ligase from Psychrobacter arcticus (strain DSM 17307 / VKM B-2377 / 273-4).